The chain runs to 340 residues: Selenide, water dikinase (340 aa).

Sec-17 is an active-site residue. Position 17 (Sec-17) is a non-standard amino acid, selenocysteine. ATP is bound by residues Lys-20 and 45–47 (NNE). Asp-48 contributes to the Mg(2+) binding site. ATP is bound by residues Asp-65, Asp-88, and 136–138 (GHT). Asp-88 lines the Mg(2+) pocket. Asp-224 provides a ligand contact to Mg(2+).

It belongs to the selenophosphate synthase 1 family. Class I subfamily. In terms of assembly, homodimer. Requires Mg(2+) as cofactor.

The catalysed reaction is hydrogenselenide + ATP + H2O = selenophosphate + AMP + phosphate + 2 H(+). Synthesizes selenophosphate from selenide and ATP. The chain is Selenide, water dikinase from Campylobacter jejuni (strain RM1221).